A 329-amino-acid chain; its full sequence is Biotin synthase (329 aa).

A Radical SAM core domain is found at 38-262; sequence NTIQVSTLLS…IMPYSYIRLS (225 aa). Positions 53, 57, and 60 each coordinate [4Fe-4S] cluster. Cys97, Cys128, Cys188, and Arg260 together coordinate [2Fe-2S] cluster.

The protein belongs to the radical SAM superfamily. Biotin synthase family. As to quaternary structure, homodimer. Requires [4Fe-4S] cluster as cofactor. The cofactor is [2Fe-2S] cluster.

The catalysed reaction is (4R,5S)-dethiobiotin + (sulfur carrier)-SH + 2 reduced [2Fe-2S]-[ferredoxin] + 2 S-adenosyl-L-methionine = (sulfur carrier)-H + biotin + 2 5'-deoxyadenosine + 2 L-methionine + 2 oxidized [2Fe-2S]-[ferredoxin]. It participates in cofactor biosynthesis; biotin biosynthesis; biotin from 7,8-diaminononanoate: step 2/2. In terms of biological role, catalyzes the conversion of dethiobiotin (DTB) to biotin by the insertion of a sulfur atom into dethiobiotin via a radical-based mechanism. The chain is Biotin synthase from Acinetobacter baylyi (strain ATCC 33305 / BD413 / ADP1).